Reading from the N-terminus, the 138-residue chain is Large ribosomal subunit protein bL17 (138 aa).

It belongs to the bacterial ribosomal protein bL17 family. Part of the 50S ribosomal subunit. Contacts protein L32.

This is Large ribosomal subunit protein bL17 from Dinoroseobacter shibae (strain DSM 16493 / NCIMB 14021 / DFL 12).